The primary structure comprises 361 residues: Phosphoserine aminotransferase (361 aa).

L-glutamate is bound at residue Arg-42. Pyridoxal 5'-phosphate is bound by residues 76-77 (AT), Trp-102, Thr-152, Asp-172, and Gln-195. Position 196 is an N6-(pyridoxal phosphate)lysine (Lys-196). Pyridoxal 5'-phosphate is bound at residue 237-238 (NT).

Belongs to the class-V pyridoxal-phosphate-dependent aminotransferase family. SerC subfamily. In terms of assembly, homodimer. Pyridoxal 5'-phosphate is required as a cofactor.

The protein localises to the cytoplasm. The enzyme catalyses O-phospho-L-serine + 2-oxoglutarate = 3-phosphooxypyruvate + L-glutamate. The catalysed reaction is 4-(phosphooxy)-L-threonine + 2-oxoglutarate = (R)-3-hydroxy-2-oxo-4-phosphooxybutanoate + L-glutamate. The protein operates within amino-acid biosynthesis; L-serine biosynthesis; L-serine from 3-phospho-D-glycerate: step 2/3. It participates in cofactor biosynthesis; pyridoxine 5'-phosphate biosynthesis; pyridoxine 5'-phosphate from D-erythrose 4-phosphate: step 3/5. Catalyzes the reversible conversion of 3-phosphohydroxypyruvate to phosphoserine and of 3-hydroxy-2-oxo-4-phosphonooxybutanoate to phosphohydroxythreonine. The polypeptide is Phosphoserine aminotransferase (Xanthomonas campestris pv. campestris (strain B100)).